Reading from the N-terminus, the 438-residue chain is 3-phosphoshikimate 1-carboxyvinyltransferase (438 aa).

Residues K21, S22, and R26 each contribute to the 3-phosphoshikimate site. K21 is a phosphoenolpyruvate binding site. Phosphoenolpyruvate contacts are provided by G93 and R121. 3-phosphoshikimate-binding residues include S166, S167, Q168, S194, D324, and K351. Q168 lines the phosphoenolpyruvate pocket. The active-site Proton acceptor is D324. Residues R355 and R395 each coordinate phosphoenolpyruvate.

The protein belongs to the EPSP synthase family. As to quaternary structure, monomer.

It localises to the cytoplasm. The catalysed reaction is 3-phosphoshikimate + phosphoenolpyruvate = 5-O-(1-carboxyvinyl)-3-phosphoshikimate + phosphate. It functions in the pathway metabolic intermediate biosynthesis; chorismate biosynthesis. Its function is as follows. Catalyzes the transfer of the enolpyruvyl moiety of phosphoenolpyruvate (PEP) to the 5-hydroxyl of shikimate-3-phosphate (S3P) to produce enolpyruvyl shikimate-3-phosphate and inorganic phosphate. The sequence is that of 3-phosphoshikimate 1-carboxyvinyltransferase from Methanobrevibacter smithii (strain ATCC 35061 / DSM 861 / OCM 144 / PS).